The sequence spans 543 residues: MAKQVKFSEDAPRSMLRGVETLPNAVKVTLGPKGRNVVLEKKFGSPLITNDGVTIPKEIELEDAYENMGAQLVKEVATKTNGIAGDGTTTATVLAAAMIREGLKNVAAGANPMVIRRGMEKAVGAAVEEIKSIAKPVENKSSIAQVAAISADDQEVGNLIAEAMEKVGKDGVITVEESKGFVTELEVVEGMQFDRGYASPYMITDTDKMEAVLNNPFILITDKKISNIQEVLPVLEQVVQSGKPLLIIAEDVEGEALATLVVNKLRGTFTAVAVKAPGFGDRRKAMLQDIAALTGGEVITEELGLDLKSTKLEQLGRAGKIVVTKENTTVVEGAGDKANIESRVAQIRQQIEDTTSDFDREKLQERLAKLAGGVAVIKVGAATETELKEKKLRIEDALNSTRAAVEEGIVPGGGTTLINAIKAVEGVKVEGEEAVGVHIVLRSLEEPVRQIAANAGLEGSVIVERLKKEPVGIGFNAATEEYVNMLEAGIVDAAKVTRSALSNAASVAAMFLTTEAVIADKPEENKAPMGMPDMGGMGGMGMM.

Residues 29 to 32, 86 to 90, Gly-413, 476 to 478, and Asp-492 each bind ATP; these read TLGP, DGTTT, and NAA.

Belongs to the chaperonin (HSP60) family. As to quaternary structure, forms a cylinder of 14 subunits composed of two heptameric rings stacked back-to-back. Interacts with the co-chaperonin GroES.

It is found in the cytoplasm. It carries out the reaction ATP + H2O + a folded polypeptide = ADP + phosphate + an unfolded polypeptide.. Its function is as follows. Together with its co-chaperonin GroES, plays an essential role in assisting protein folding. The GroEL-GroES system forms a nano-cage that allows encapsulation of the non-native substrate proteins and provides a physical environment optimized to promote and accelerate protein folding. The sequence is that of Chaperonin GroEL from Brevibacillus choshinensis.